Reading from the N-terminus, the 185-residue chain is UPF0200 protein Mevan_0592 (185 aa).

8–15 (GMPGSGKS) lines the ATP pocket.

It belongs to the UPF0200 family.

The protein is UPF0200 protein Mevan_0592 of Methanococcus vannielii (strain ATCC 35089 / DSM 1224 / JCM 13029 / OCM 148 / SB).